The primary structure comprises 134 residues: Putative nickel-responsive regulator (134 aa).

Ni(2+) is bound by residues H78, H89, H91, and C97.

Belongs to the transcriptional regulatory CopG/NikR family. The cofactor is Ni(2+).

In terms of biological role, transcriptional regulator. This is Putative nickel-responsive regulator from Chlorobaculum parvum (strain DSM 263 / NCIMB 8327) (Chlorobium vibrioforme subsp. thiosulfatophilum).